The chain runs to 89 residues: Protein M7 (89 aa).

Positions 1-25 (MAAMKSLATAILVVLLLRRLPRGLS) are cleaved as a signal peptide. 4 disulfide bridges follow: cysteine 28–cysteine 65, cysteine 38–cysteine 54, cysteine 55–cysteine 80, and cysteine 67–cysteine 87.

Belongs to the A9/FIL1 family. In terms of tissue distribution, tapetum of anthers.

The protein localises to the secreted. The polypeptide is Protein M7 (M7) (Lilium henryi (Henry's lily)).